The chain runs to 183 residues: Adenylate kinase (183 aa).

Residue 12-17 (GAGKGT) participates in ATP binding. Residues 32-61 (STGDLLRSEVAAGTALGQEAEAVMNRGELV) form an NMP region. AMP contacts are provided by residues Thr33, Arg38, 59–61 (ELV), 86–89 (GFPR), and Gln93. The tract at residues 127–133 (ARGRDDD) is LID. Arg128 serves as a coordination point for ATP. AMP contacts are provided by Arg130 and Arg141. An ATP-binding site is contributed by Gly169.

Belongs to the adenylate kinase family. Monomer.

It localises to the cytoplasm. The enzyme catalyses AMP + ATP = 2 ADP. Its pathway is purine metabolism; AMP biosynthesis via salvage pathway; AMP from ADP: step 1/1. Functionally, catalyzes the reversible transfer of the terminal phosphate group between ATP and AMP. Plays an important role in cellular energy homeostasis and in adenine nucleotide metabolism. The sequence is that of Adenylate kinase from Parasynechococcus marenigrum (strain WH8102).